The sequence spans 90 residues: MARSLKKGPFADDHLLKKVDEAIAKNSRKPIKTWSRRSTIFPQFVGLTFLVHNGKIFNEVYVTDDMVGHKLGEFSPTRTYHGHGKDKAKK.

Belongs to the universal ribosomal protein uS19 family.

Functionally, protein S19 forms a complex with S13 that binds strongly to the 16S ribosomal RNA. In Mesomycoplasma hyopneumoniae (strain 232) (Mycoplasma hyopneumoniae), this protein is Small ribosomal subunit protein uS19.